The chain runs to 534 residues: ATP-dependent rRNA helicase RRP3 (534 aa).

The disordered stretch occupies residues 67–107 (KQQALQKQQKQQKQQEQENANHNQTESSLSSSSSTTSSSIT). 2 stretches are compositionally biased toward low complexity: residues 68 to 80 (QQAL…QQKQ) and 91 to 107 (TESS…SSIT). The Q motif signature appears at 118-146 (KTFKELNLVPDLLESIESMKFTKPTPIQS). Residues 149 to 320 (IPHALEGKDI…RASLHNPVRV (172 aa)) form the Helicase ATP-binding domain. ATP is bound at residue 162–169 (AQTGSGKT). A DEAD box motif is present at residues 268-271 (DEAD). One can recognise a Helicase C-terminal domain in the interval 347 to 492 (ILIHLLNEFM…EDKPPKEVLD (146 aa)). 2 stretches are compositionally biased toward basic and acidic residues: residues 505–517 (AIRQ…DKRN) and 525–534 (NRDDADREER). Positions 505–534 (AIRQTKEIHDKRNGGGGRRRNRDDADREER) are disordered.

Belongs to the DEAD box helicase family. DDX47/RRP3 subfamily. Interacts with the SSU processome.

The protein resides in the nucleus. The catalysed reaction is ATP + H2O = ADP + phosphate + H(+). Its function is as follows. ATP-dependent rRNA helicase required for pre-ribosomal RNA processing. Involved in the maturation of the 35S-pre-rRNA and to its cleavage to mature 18S rRNA. This chain is ATP-dependent rRNA helicase RRP3, found in Candida albicans (strain SC5314 / ATCC MYA-2876) (Yeast).